A 327-amino-acid polypeptide reads, in one-letter code: Methionyl-tRNA formyltransferase (327 aa).

121-124 (SLLP) contributes to the (6S)-5,6,7,8-tetrahydrofolate binding site.

The protein belongs to the Fmt family.

The catalysed reaction is L-methionyl-tRNA(fMet) + (6R)-10-formyltetrahydrofolate = N-formyl-L-methionyl-tRNA(fMet) + (6S)-5,6,7,8-tetrahydrofolate + H(+). Attaches a formyl group to the free amino group of methionyl-tRNA(fMet). The formyl group appears to play a dual role in the initiator identity of N-formylmethionyl-tRNA by promoting its recognition by IF2 and preventing the misappropriation of this tRNA by the elongation apparatus. In Burkholderia ambifaria (strain MC40-6), this protein is Methionyl-tRNA formyltransferase.